The primary structure comprises 161 residues: Regulator of ribonuclease activity A (161 aa).

Belongs to the RraA family. In terms of assembly, homotrimer. Binds to both RNA-binding sites in the C-terminal region of Rne and to RhlB.

It localises to the cytoplasm. In terms of biological role, globally modulates RNA abundance by binding to RNase E (Rne) and regulating its endonucleolytic activity. Can modulate Rne action in a substrate-dependent manner by altering the composition of the degradosome. Modulates RNA-binding and helicase activities of the degradosome. The sequence is that of Regulator of ribonuclease activity A from Escherichia fergusonii (strain ATCC 35469 / DSM 13698 / CCUG 18766 / IAM 14443 / JCM 21226 / LMG 7866 / NBRC 102419 / NCTC 12128 / CDC 0568-73).